The chain runs to 758 residues: POU domain, class 2, transcription factor 1 (758 aa).

Polar residues-rich tracts occupy residues 1 to 10 (MKLHSSSKIQ), 19 to 30 (RMNNPSETSKSP), and 275 to 285 (VQQLPQSQTTP). 5 disordered regions span residues 1–43 (MKLH…QTNG), 271–296 (AATP…LEEP), 377–398 (TNQS…RRKK), 450–472 (EKRI…LFSS), and 534–573 (SVLT…MTSS). The POU-specific domain maps to 294 to 368 (EEPSDLEELE…LLEKWLNDAE (75 aa)). A DNA-binding region (homeobox) is located at residues 395 to 454 (RRKKRTSIETNIRVALEKSFLENQKPTSEEITMIADQLNMEKEVIRVWFCNRRQKEKRIN). Positions 455 to 472 (PPSSGGSSSSPIKSLFSS) are enriched in low complexity.

Belongs to the POU transcription factor family. Class-2 subfamily. Expressed in oocytes (at protein level). Expressed in the tadpole brain (at protein level).

It is found in the cytoplasm. The protein localises to the nucleus. In terms of biological role, transcription factor that binds to the octamer motif (5'-ATTTGCAT-3') and activates the promoters of the genes of some small nuclear RNAs (snRNA) and histone H2B. In vitro does not bind to variant octamer sequences, such as the H2B octamer 5'-GTTTGCAT-3', although binding has been observed in vivo during early embryogenesis, suggesting that interactions between pou2f1 and other factors might be required for octamer-dependent H2B transcription. Acts downstream of Notch signaling during radial glia formation. May be important for gastrulation, possibly through the regulation of an FGF-type signaling pathway. This is POU domain, class 2, transcription factor 1 (pou2f1) from Xenopus laevis (African clawed frog).